The sequence spans 889 residues: Exocyst complex component 1 (889 aa).

Phosphoserine is present on residues Ser-145 and Ser-148. Positions 156–269 (RAVQKTQHMD…GHVKETMEKI (114 aa)) form a coiled coil. A Phosphoserine modification is found at Ser-456.

The protein belongs to the SEC3 family. In terms of assembly, the exocyst complex is composed of Sec3/Exoc1, Sec5/Exoc2, Sec6/Exoc3, Sec8/Exoc4, Sec10/Exoc5, Sec15/Exoc6, Exo70/Exoc7 and Exo84/Exoc8.

Its function is as follows. Component of the exocyst complex involved in the docking of exocytic vesicles with fusion sites on the plasma membrane. This is Exocyst complex component 1 from Drosophila melanogaster (Fruit fly).